The chain runs to 98 residues: NADH-ubiquinone oxidoreductase chain 4L (98 aa).

3 helical membrane-spanning segments follow: residues 1-21 (MPII…GMLI), 29-49 (SLLC…LMAL), and 58-78 (IVPI…LALL).

Belongs to the complex I subunit 4L family. In terms of assembly, core subunit of respiratory chain NADH dehydrogenase (Complex I) which is composed of 45 different subunits.

The protein resides in the mitochondrion inner membrane. The catalysed reaction is a ubiquinone + NADH + 5 H(+)(in) = a ubiquinol + NAD(+) + 4 H(+)(out). Functionally, core subunit of the mitochondrial membrane respiratory chain NADH dehydrogenase (Complex I) which catalyzes electron transfer from NADH through the respiratory chain, using ubiquinone as an electron acceptor. Part of the enzyme membrane arm which is embedded in the lipid bilayer and involved in proton translocation. The polypeptide is NADH-ubiquinone oxidoreductase chain 4L (MT-ND4L) (Colobus guereza (Mantled guereza)).